A 262-amino-acid polypeptide reads, in one-letter code: ATP synthase subunit a (262 aa).

7 helical membrane passes run 30–50 (ITSL…LTIF), 64–84 (WNIV…DQIG), 91–111 (LIYF…NILG), 123–143 (ISVT…IGFS), 149–169 (FFSL…LVLI), 195–215 (LFGV…SLLL), and 220–240 (ITLP…VALL).

This sequence belongs to the ATPase A chain family. In terms of assembly, F-type ATPases have 2 components, CF(1) - the catalytic core - and CF(0) - the membrane proton channel. CF(1) has five subunits: alpha(3), beta(3), gamma(1), delta(1), epsilon(1). CF(0) has three main subunits: a, b and c.

The protein resides in the mitochondrion inner membrane. Functionally, mitochondrial membrane ATP synthase (F(1)F(0) ATP synthase or Complex V) produces ATP from ADP in the presence of a proton gradient across the membrane which is generated by electron transport complexes of the respiratory chain. F-type ATPases consist of two structural domains, F(1) - containing the extramembraneous catalytic core and F(0) - containing the membrane proton channel, linked together by a central stalk and a peripheral stalk. During catalysis, ATP synthesis in the catalytic domain of F(1) is coupled via a rotary mechanism of the central stalk subunits to proton translocation. Key component of the proton channel; it may play a direct role in the translocation of protons across the membrane. In Allomyces macrogynus, this protein is ATP synthase subunit a (ATP6).